The chain runs to 142 residues: Glia maturation factor gamma (142 aa).

Ser-2 carries the N-acetylserine modification. In terms of domain architecture, ADF-H spans 4–139 (SLVVCDVDPE…NETWLKEKLA (136 aa)).

Belongs to the actin-binding proteins ADF family. GMF subfamily. Expressed in rat thymus, testis, and spleen. Is present predominantly in proliferative and differentiative organs.

This chain is Glia maturation factor gamma (Gmfg), found in Rattus norvegicus (Rat).